The chain runs to 242 residues: Venom nerve growth factor 3 (242 aa).

The signal sequence occupies residues Met-1–Ala-18. A propeptide spanning residues Ala-19–Arg-125 is cleaved from the precursor. The interval His-45–Pro-69 is disordered. Over residues Glu-46–Asp-66 the composition is skewed to basic and acidic residues. 3 disulfide bridges follow: Cys-139/Cys-203, Cys-181/Cys-231, and Cys-191/Cys-233.

This sequence belongs to the NGF-beta family. In terms of assembly, homodimer; non-covalently linked. Expressed by the venom gland.

Its subcellular location is the secreted. Its function is as follows. Nerve growth factor is important for the development and maintenance of the sympathetic and sensory nervous systems. It stimulates division and differentiation of sympathetic and embryonic sensory neurons as well as basal forebrain cholinergic neurons in the brain. Its relevance in the snake venom is not clear. However, it has been shown to inhibit metalloproteinase-dependent proteolysis of platelet glycoprotein Ib alpha, suggesting a metalloproteinase inhibition to prevent metalloprotease autodigestion and/or protection against prey proteases. Binds a lipid between the two protein chains in the homodimer. The lipid-bound form promotes histamine relase from mouse mast cells, contrary to the lipid-free form. The chain is Venom nerve growth factor 3 from Pseudechis australis (Mulga snake).